The chain runs to 413 residues: Peptidase T (413 aa).

Residue His84 coordinates Zn(2+). The active site involves Asp86. Asp146 contacts Zn(2+). The active-site Proton acceptor is Glu180. Residues Glu181, Asp203, and His385 each coordinate Zn(2+).

The protein belongs to the peptidase M20B family. Requires Zn(2+) as cofactor.

The protein localises to the cytoplasm. The enzyme catalyses Release of the N-terminal residue from a tripeptide.. Functionally, cleaves the N-terminal amino acid of tripeptides. This is Peptidase T from Limosilactobacillus fermentum (strain NBRC 3956 / LMG 18251) (Lactobacillus fermentum).